Consider the following 151-residue polypeptide: UPF0735 ACT domain-containing protein SERP1207 (151 aa).

Residues 74–149 form the ACT domain; the sequence is TLILYVNDIV…HVTKVDLISM (76 aa).

The protein belongs to the UPF0735 family.

This is UPF0735 ACT domain-containing protein SERP1207 from Staphylococcus epidermidis (strain ATCC 35984 / DSM 28319 / BCRC 17069 / CCUG 31568 / BM 3577 / RP62A).